The following is a 697-amino-acid chain: Elongation factor G (697 aa).

The tr-type G domain maps to 8–290 (ERYRNFGIMA…AVVDYLPSPL (283 aa)). Residues 17–24 (AHIDAGKT), 88–92 (DTPGH), and 142–145 (NKLD) each bind GTP.

It belongs to the TRAFAC class translation factor GTPase superfamily. Classic translation factor GTPase family. EF-G/EF-2 subfamily.

Its subcellular location is the cytoplasm. In terms of biological role, catalyzes the GTP-dependent ribosomal translocation step during translation elongation. During this step, the ribosome changes from the pre-translocational (PRE) to the post-translocational (POST) state as the newly formed A-site-bound peptidyl-tRNA and P-site-bound deacylated tRNA move to the P and E sites, respectively. Catalyzes the coordinated movement of the two tRNA molecules, the mRNA and conformational changes in the ribosome. This chain is Elongation factor G, found in Sphingopyxis alaskensis (strain DSM 13593 / LMG 18877 / RB2256) (Sphingomonas alaskensis).